The primary structure comprises 62 residues: Large ribosomal subunit protein bL28 (62 aa).

The disordered stretch occupies residues 1 to 24 (MGKQCFVTGRKASTGNNRSHALNS). Residues 11–24 (KASTGNNRSHALNS) are compositionally biased toward polar residues.

The protein belongs to the bacterial ribosomal protein bL28 family.

This Staphylococcus saprophyticus subsp. saprophyticus (strain ATCC 15305 / DSM 20229 / NCIMB 8711 / NCTC 7292 / S-41) protein is Large ribosomal subunit protein bL28.